We begin with the raw amino-acid sequence, 220 residues long: Aklanonic acid methyltransferase DauC (220 aa).

The protein belongs to the methyltransferase superfamily. DnrC family. Homodimer.

It catalyses the reaction aklanonate + S-adenosyl-L-methionine = methyl aklanonate + S-adenosyl-L-homocysteine. It functions in the pathway antibiotic biosynthesis; daunorubicin biosynthesis. The protein operates within antibiotic biosynthesis; carminomycin biosynthesis. It participates in antibiotic biosynthesis; rhodomycin biosynthesis. Its pathway is antibiotic biosynthesis; aclacinomycin biosynthesis. In terms of biological role, involved in the biosynthesis of aklavinone which is an important precursor common to the formation of the clinically significant anthracyclines such as carminomycin, daunorubicin (daunomycin), rhodomycin, aclacinomycin T (aklavin) and aclacinomycin A (aclarubicin). These compounds are aromatic polyketide antibiotics that exhibit high cytotoxicity and are widely applied in the chemotherapy of a variety of cancers. Catalyzes the methyl esterification of aklanonic acid to yield aklanonic acid methyl ester. In Streptomyces sp. (strain C5), this protein is Aklanonic acid methyltransferase DauC (dauC).